A 3508-amino-acid chain; its full sequence is WD repeat and FYVE domain-containing protein 3 (3508 aa).

Ser-1942 and Ser-2277 each carry phosphoserine. Disordered regions lie at residues 2279–2303 (FGLS…SPSP) and 2441–2504 (SSEG…EKTD). The tract at residues 2284–2963 (LTGSRRNRKE…PHPPKRVRSR (680 aa)) is sufficient for translocalization to p62 bodies/ALIS. Residues 2450 to 2459 (EPEHGEDTIA) show a composition bias toward basic and acidic residues. Phosphoserine is present on Ser-2474. The 126-residue stretch at 2513 to 2638 (EEGEKIQHMY…IRNKVYQRFL (126 aa)) folds into the BEACH-type PH domain. Residues 2568–3508 (MHEPIIPRGA…RGAEDGPRNC (941 aa)) form an interaction with SQSTM1 region. Positions 2665–2958 (GLLSTLVGEK…QLFKKPHPPK (294 aa)) constitute a BEACH domain. Residues 2963-3508 (RLNGDNIGIS…RGAEDGPRNC (546 aa)) are interaction with ATG5. WD repeat units lie at residues 3059 to 3097 (SEWG…EKAK), 3107 to 3146 (GHTD…FLTQ), 3149 to 3188 (GHRA…VSVN), and 3192 to 3236 (GRSQ…VPET). The segment at 3254–3317 (AQIGQQAQDD…SGSDDSRRWS (64 aa)) is disordered. Acidic residues predominate over residues 3261-3272 (QDDDSSDSETEE). Ser-3317 and Ser-3321 each carry phosphoserine. Residues 3326 to 3331 (DGFIFV) carry the LIR motif. The WD 5 repeat unit spans residues 3390–3429 (THPAEVTALGVSKDHSRILVGDSRGRVFSWSVSDQPGRSA). The FYVE-type zinc-finger motif lies at 3436-3496 (DEGGDSCSGC…VCQNCYYSLQ (61 aa)). Cys-3442, Cys-3445, Cys-3458, Cys-3461, Cys-3466, Cys-3469, Cys-3488, and Cys-3491 together coordinate Zn(2+).

As to quaternary structure, directly interacts with ATG5 and associates with the ATG12-ATG5-ATG16L complex. Interacts with p62/SQSTM1. Directly interacts with GABARAP, GABARAPL1 and GABARAPL2; the interaction with GABARAP is required for WDFY3 recruitment to MAP1LC3B-positive p62/SQSTM1 bodies. Weakly interacts with MAP1LC3C; this interaction is direct. Does not interact with MAP1LC3A, nor MAP1LC3B. Interacts with TRAF6. In terms of tissue distribution, widely expressed, with high levels in the brain (at protein level). In the brain, expressed by both neuronal and non-neuronal cells. Expressed in bones, in the periosteum, cartilage, growth plate, trabeculae of the primary spongiosa, and scattered hematopoietic cells within the medullary cavity. Tends to be expressed at lower levels in the hypertrophic zone compared to trabeculae. Expressed in osteoblasts, osteoclasts and bone-marrow derived macrophages.

It localises to the nucleus. The protein resides in the cytoplasm. The protein localises to the cytosol. It is found in the PML body. Its subcellular location is the membrane. It localises to the perikaryon. The protein resides in the cell projection. The protein localises to the axon. In terms of biological role, required for selective macroautophagy (aggrephagy). Acts as an adapter protein by linking specific proteins destined for degradation to the core autophagic machinery members, such as the ATG5-ATG12-ATG16L E3-like ligase, SQSTM1 and LC3. Involved in the formation and autophagic degradation of cytoplasmic ubiquitin-containing inclusions (p62 bodies, ALIS/aggresome-like induced structures). Important for normal brain development. Essential for the formation of axonal tracts throughout the brain and spinal cord, including the formation of the major forebrain commissures. Involved in the ability of neural cells to respond to guidance cues. Required for cortical neurons to respond to the trophic effects of netrin-1/NTN1. Regulates Wnt signaling through the removal of DVL3 aggregates, likely in an autophagy-dependent manner. This process may be important for the determination of brain size during embryonic development. May regulate osteoclastogenesis by acting on the TNFSF11/RANKL - TRAF6 pathway. After cytokinetic abscission, involved in midbody remnant degradation. In vitro strongly binds to phosphatidylinositol 3-phosphate (PtdIns3P). This chain is WD repeat and FYVE domain-containing protein 3 (Wdfy3), found in Mus musculus (Mouse).